Here is a 93-residue protein sequence, read N- to C-terminus: Small ribosomal subunit protein uS19 (93 aa).

It belongs to the universal ribosomal protein uS19 family.

Functionally, protein S19 forms a complex with S13 that binds strongly to the 16S ribosomal RNA. The sequence is that of Small ribosomal subunit protein uS19 from Leifsonia xyli subsp. xyli (strain CTCB07).